Consider the following 104-residue polypeptide: Gastrin (104 aa).

A signal peptide spans 1 to 21; it reads MQRLCVCVLILALALTAFSEA. A disordered region spans residues 22–49; that stretch reads SWKPRSQLQDAPSGPGANGGLEPHWLNR. Positions 22-58 are excised as a propeptide; the sequence is SWKPRSQLQDAPSGPGANGGLEPHWLNRLGPASHHRW. Pyrrolidone carboxylic acid is present on residues glutamine 59 and glutamine 76. Tyrosine 87 bears the Sulfotyrosine mark. Residue phenylalanine 92 is modified to Phenylalanine amide. At serine 96 the chain carries Phosphoserine. A propeptide spanning residues 96–104 is cleaved from the precursor; sequence SAEDGDQHP.

This sequence belongs to the gastrin/cholecystokinin family.

It localises to the secreted. Functionally, gastrin stimulates the stomach mucosa to produce and secrete hydrochloric acid and the pancreas to secrete its digestive enzymes. It also stimulates smooth muscle contraction and increases blood circulation and water secretion in the stomach and intestine. This Felis catus (Cat) protein is Gastrin (GAST).